The sequence spans 84 residues: RNA-binding protein Hfq (84 aa).

One can recognise a Sm domain in the interval 9–68 (DPYLNTLRKERVPVSIYLVNGIKLQGQIESFDQFVILLKNTVSQMVYKHAISTVVPSRPV).

Belongs to the Hfq family. Homohexamer.

RNA chaperone that binds small regulatory RNA (sRNAs) and mRNAs to facilitate mRNA translational regulation in response to envelope stress, environmental stress and changes in metabolite concentrations. Also binds with high specificity to tRNAs. The sequence is that of RNA-binding protein Hfq from Azotobacter vinelandii (strain DJ / ATCC BAA-1303).